The sequence spans 509 residues: Maturase K (509 aa).

The protein belongs to the intron maturase 2 family. MatK subfamily.

Its subcellular location is the plastid. It is found in the chloroplast. Its function is as follows. Usually encoded in the trnK tRNA gene intron. Probably assists in splicing its own and other chloroplast group II introns. In Solanum tuberosum (Potato), this protein is Maturase K.